The chain runs to 66 residues: Large ribosomal subunit protein uL29 (66 aa).

It belongs to the universal ribosomal protein uL29 family.

This Rhizobium leguminosarum bv. trifolii (strain WSM2304) protein is Large ribosomal subunit protein uL29.